The chain runs to 251 residues: Endonuclease NucS (251 aa).

Positions 230-240 (LEPPKKGNEKR) are enriched in basic and acidic residues. The tract at residues 230 to 251 (LEPPKKGNEKRSKQKTLDFFTP) is disordered.

Belongs to the NucS endonuclease family. As to quaternary structure, homodimer. Interacts with PCNA.

It is found in the cytoplasm. Activity is modulated by PCNA. PCNA increases the binding affinity of NucS towards ssDNA as well as branched DNA substrates carrying either 3' or 5' flaps. PCNA is also required for optimal loading of NucS on its substrates and to direct activity towards ss/dsDNA junction. Its function is as follows. Cleaves both 3' and 5' ssDNA extremities of branched DNA structures. Binds to ssDNA. This Pyrococcus abyssi (strain GE5 / Orsay) protein is Endonuclease NucS.